The chain runs to 151 residues: Calmodulin (151 aa).

EF-hand domains follow at residues 10-45 (EQIS…LGQN), 46-81 (PTEA…KMKD), 83-118 (DSEE…LGEK), and 119-151 (LTDE…MLSK). Residues Asp23, Asp25, Asp27, Ser29, Glu34, Asp59, Asp61, Asn63, Thr65, Glu70, Asp96, Asp98, Asn100, Glu107, Asp132, Asp134, Asp136, and Glu143 each coordinate Ca(2+).

The protein belongs to the calmodulin family.

Functionally, calmodulin mediates the control of a large number of enzymes, ion channels and other proteins by Ca(2+). Among the enzymes to be stimulated by the calmodulin-Ca(2+) complex are a number of protein kinases and phosphatases. The sequence is that of Calmodulin from Pneumocystis carinii.